Reading from the N-terminus, the 734-residue chain is Photosystem I P700 chlorophyll a apoprotein A2 (734 aa).

Helical transmembrane passes span 46–69 (IFAS…FHVA), 135–158 (LYTG…LHLQ), 175–199 (LNHH…HVAI), 273–291 (IAHH…GHMY), 330–353 (LHFQ…QHMY), 369–395 (AALY…IFFI), 417–439 (AIIS…LYVH), and 517–535 (FLVH…LILV). The [4Fe-4S] cluster site is built by C559 and C568. A run of 2 helical transmembrane segments spans residues 575-596 (AFYL…YWHW) and 643-665 (LSVW…MFLI). Chlorophyll a contacts are provided by H654, M662, and Y670. W671 lines the phylloquinone pocket. The chain crosses the membrane as a helical span at residues 707–727 (LVGLAHFSVGYIFTYAAFLIA).

Belongs to the PsaA/PsaB family. As to quaternary structure, the PsaA/B heterodimer binds the P700 chlorophyll special pair and subsequent electron acceptors. PSI consists of a core antenna complex that captures photons, and an electron transfer chain that converts photonic excitation into a charge separation. The eukaryotic PSI reaction center is composed of at least 11 subunits. P700 is a chlorophyll a/chlorophyll a' dimer, A0 is one or more chlorophyll a, A1 is one or both phylloquinones and FX is a shared 4Fe-4S iron-sulfur center. is required as a cofactor.

Its subcellular location is the plastid. The protein resides in the chloroplast thylakoid membrane. The enzyme catalyses reduced [plastocyanin] + hnu + oxidized [2Fe-2S]-[ferredoxin] = oxidized [plastocyanin] + reduced [2Fe-2S]-[ferredoxin]. Functionally, psaA and PsaB bind P700, the primary electron donor of photosystem I (PSI), as well as the electron acceptors A0, A1 and FX. PSI is a plastocyanin-ferredoxin oxidoreductase, converting photonic excitation into a charge separation, which transfers an electron from the donor P700 chlorophyll pair to the spectroscopically characterized acceptors A0, A1, FX, FA and FB in turn. Oxidized P700 is reduced on the lumenal side of the thylakoid membrane by plastocyanin. This is Photosystem I P700 chlorophyll a apoprotein A2 from Nicotiana tabacum (Common tobacco).